The primary structure comprises 421 residues: WD repeat and SOCS box-containing protein 1 (421 aa).

WD repeat units lie at residues Lys32 to Leu71, Ser124 to Asn165, Asp168 to Lys208, Gly212 to Lys251, Gly254 to Glu293, and Ala309 to Val346. The SOCS box domain maps to Asp372 to Ile421.

In terms of assembly, interacts with DIO2. Component of the probable ECS(WSB1) E3 ubiquitin ligase complex which contains CUL5, RNF7/RBX2, Elongin BC complex and WSB1. Component of a probable ECS-like E3 ubiquitin-protein ligase complex which contains CUL5, RBX1, Elongin BC complex and WSB1. Interacts with CUL5, RNF7, ELOB and ELOC. Binds to HIPK2 through WD40 repeats.

It participates in protein modification; protein ubiquitination. Its function is as follows. Probable substrate-recognition component of a SCF-like ECS (Elongin-Cullin-SOCS-box protein) E3 ubiquitin ligase complex which mediates the ubiquitination and subsequent proteasomal degradation of target proteins. Recognizes type II iodothyronine deiodinase/DIO2. Confers constitutive instability to HIPK2 through proteasomal degradation. This is WD repeat and SOCS box-containing protein 1 (WSB1) from Homo sapiens (Human).